A 36-amino-acid polypeptide reads, in one-letter code: Pancreatic polypeptide (36 aa).

Tyr-36 bears the Tyrosine amide mark.

The protein belongs to the NPY family.

The protein localises to the secreted. In terms of biological role, hormone secreted by pancreatic cells that acts as a regulator of pancreatic and gastrointestinal functions probably by signaling through the G protein-coupled receptor NPY4R2. This is Pancreatic polypeptide (PPY) from Tapirus pinchaque (Mountain tapir).